Here is a 150-residue protein sequence, read N- to C-terminus: Transcriptional repressor NrdR (150 aa).

Residues 3 to 33 (CPFCGGESRVLESRPASDEEAVRRRRECLAC) fold into a zinc finger. Residues 48–138 (LIVVKKDGRR…VYREFKDLNE (91 aa)) form the ATP-cone domain.

The protein belongs to the NrdR family. The cofactor is Zn(2+).

Negatively regulates transcription of bacterial ribonucleotide reductase nrd genes and operons by binding to NrdR-boxes. This chain is Transcriptional repressor NrdR, found in Symbiobacterium thermophilum (strain DSM 24528 / JCM 14929 / IAM 14863 / T).